The sequence spans 225 residues: MGFGDLKTPAGLQVLNDYLADKSYIEGYVPSQADVAVFEAVSGPPPADLCHALRWYNHIKSYEKEKASLPGVKKSLGKYGPSSVEDTTGSGAADAKDDDDIDLFGSDDEEESEEAKKLREERLAQYESKKAKKPAVVAKSSILLDVKPWDDETDMTKLEECVRSIQADGLVWGSSKLVPVGYGIKKLQIQCVVEDDKVGTDMLEEQITAFEDYVQSMDVAAFNKI.

The region spanning 2 to 90 (GFGDLKTPAG…PSSVEDTTGS (89 aa)) is the GST C-terminal domain. Lys7 carries the N6-acetyllysine modification. Ser42 and Ser83 each carry phosphoserine. The interval 73–115 (KKSLGKYGPSSVEDTTGSGAADAKDDDDIDLFGSDDEEESEEA) is disordered. Thr88 carries the phosphothreonine modification. Over residues 96-113 (KDDDDIDLFGSDDEEESE) the composition is skewed to acidic residues. At Ser106 the chain carries Phosphoserine. Residue Lys147 forms a Glycyl lysine isopeptide (Lys-Gly) (interchain with G-Cter in SUMO2) linkage. The residue at position 174 (Ser174) is a Phosphoserine.

Belongs to the EF-1-beta/EF-1-delta family. EF-1 is composed of 4 subunits: alpha, beta (alpha subunit of the eEF1B subcomplex), delta (beta subunit of the eEF1B subcomplex), and gamma (gamma subunit of the eEF1B subcomplex). Interacts with elongation factor EEF1A1. In terms of processing, phosphorylation affects the GDP/GTP exchange rate.

In terms of biological role, catalytic subunit of the guanine nucleotide exchange factor (GEF) (eEF1B subcomplex) of the eukaryotic elongation factor 1 complex (eEF1). Stimulates the exchange of GDP for GTP on elongation factor 1A (eEF1A), probably by displacing GDP from the nucleotide binding pocket in eEF1A. The polypeptide is Elongation factor 1-beta (Eef1b) (Mus musculus (Mouse)).